Here is a 293-residue protein sequence, read N- to C-terminus: 4-diphosphocytidyl-2-C-methyl-D-erythritol kinase (293 aa).

Lys-16 is an active-site residue. 99–109 lines the ATP pocket; that stretch reads PMGAGLGGGSS. Asp-141 is a catalytic residue.

This sequence belongs to the GHMP kinase family. IspE subfamily.

It catalyses the reaction 4-CDP-2-C-methyl-D-erythritol + ATP = 4-CDP-2-C-methyl-D-erythritol 2-phosphate + ADP + H(+). It functions in the pathway isoprenoid biosynthesis; isopentenyl diphosphate biosynthesis via DXP pathway; isopentenyl diphosphate from 1-deoxy-D-xylulose 5-phosphate: step 3/6. In terms of biological role, catalyzes the phosphorylation of the position 2 hydroxy group of 4-diphosphocytidyl-2C-methyl-D-erythritol. This chain is 4-diphosphocytidyl-2-C-methyl-D-erythritol kinase, found in Paraburkholderia phytofirmans (strain DSM 17436 / LMG 22146 / PsJN) (Burkholderia phytofirmans).